A 672-amino-acid chain; its full sequence is tRNA(Met) cytidine acetyltransferase TmcA (672 aa).

Residues Gln180, 202–211, and Arg319 each bind ATP; that span reads GRGKSALAGQ. One can recognise an N-acetyltransferase domain in the interval 349-531; it reads IEISAFYQQA…SGCYTAMALL (183 aa). Residues 461–463, 468–474, and Arg506 contribute to the acetyl-CoA site; these read IAV and QREGIGQ.

Belongs to the RNA cytidine acetyltransferase family. TmcA subfamily.

The protein resides in the cytoplasm. It catalyses the reaction cytidine(34) in elongator tRNA(Met) + acetyl-CoA + ATP + H2O = N(4)-acetylcytidine(34) in elongator tRNA(Met) + ADP + phosphate + CoA + H(+). Functionally, catalyzes the formation of N(4)-acetylcytidine (ac(4)C) at the wobble position of tRNA(Met), by using acetyl-CoA as an acetyl donor and ATP (or GTP). The sequence is that of tRNA(Met) cytidine acetyltransferase TmcA from Salmonella typhimurium (strain LT2 / SGSC1412 / ATCC 700720).